Consider the following 171-residue polypeptide: Calcium-binding protein F-like (171 aa).

EF-hand domains are found at residues 6–41 (KIFE…KMNG), 57–80 (IDMD…KAKK), 89–124 (AALA…RGYT), and 130–159 (DQYL…RRID). Ca(2+) contacts are provided by Asp-19, Asn-21, Asp-23, Ser-25, and Asp-30. Asp-102, Asp-104, Asp-106, Lys-108, Glu-113, Asp-137, Asp-139, Asp-141, Cys-143, and Glu-148 together coordinate Ca(2+).

This is Calcium-binding protein F-like (cbp12) from Dictyostelium discoideum (Social amoeba).